The sequence spans 402 residues: Potassium channel subfamily K member 9 (402 aa).

The Cytoplasmic portion of the chain corresponds to 1–8 (MKRQNVRT). A helical membrane pass occupies residues 9–29 (LSLIACTFTYLLVGAAVFDAL). The Extracellular segment spans residues 30–88 (ESDHEMREEEKLKAEEVRLRGKYNISSDDYQQLELVILQSEPHRAGVQWKFAGSFYFAI). N-linked (GlcNAc...) asparagine glycosylation is present at asparagine 53. Residues 89-101 (TVITTIGYGHAAP) constitute an intramembrane region (pore-forming). The K(+) site is built by threonine 93, isoleucine 94, glycine 95, and tyrosine 96. The interval 93–98 (TIGYGH) is selectivity filter 1. Topologically, residues 102–107 (GTDAGK) are extracellular. A helical transmembrane segment spans residues 108–128 (AFCMFYAVLGIPLTLVMFQSL). Residues 129-158 (GERMNTFVRYLLKRIKKCCGMRNTEVSMEN) are Cytoplasmic-facing. Residues 159 to 179 (MVTVGFFSCMGTLCLGAAAFS) form a helical membrane-spanning segment. Topologically, residues 180–194 (QCEDWSFFHAYYYCF) are extracellular. Positions 195 to 207 (ITLTTIGFGDFVA) form an intramembrane region, pore-forming. Residues threonine 199, isoleucine 200, glycine 201, and phenylalanine 202 each coordinate K(+). The segment at 199 to 204 (TIGFGD) is selectivity filter 2. Residues 208–218 (LQAKGALQRKP) lie on the Extracellular side of the membrane. A helical transmembrane segment spans residues 219–239 (FYVAFSFMYILVGLTVIGAFL). Residues 240 to 402 (NLVVLRFLTM…HRLHLRRKSI (163 aa)) lie on the Cytoplasmic side of the membrane. Residues 243 to 248 (VLRFLT) form an X-gate region.

This sequence belongs to the two pore domain potassium channel (TC 1.A.1.8) family. In terms of assembly, homodimer. Heterodimer with KCNK1. Heterodimer with KCNK3. Expressed in adrenal glands mainly in outer zona glomerulosa and inner zona medullaris. Expressed in retinal ganglion cells. Expressed in dentate gyrus (at protein level).

Its subcellular location is the cell membrane. It is found in the mitochondrion inner membrane. The protein resides in the cell projection. It localises to the dendrite. The enzyme catalyses K(+)(in) = K(+)(out). It catalyses the reaction Na(+)(in) = Na(+)(out). Inhibited by NTS:NTSR1 signaling in dentate gyrus granule cells. Functionally, k(+) channel that conducts voltage-dependent outward rectifying currents upon membrane depolarization. Voltage sensing is coupled to K(+) electrochemical gradient in an 'ion flux gating' mode where outward but not inward ion flow opens the gate. Changes ion selectivity and becomes permeable to Na(+) ions in response to extracellular acidification. Protonation of the pH sensor His-98 stabilizes C-type inactivation conformation likely converting the channel from outward K(+)-conducting, to inward Na(+)-conducting to nonconductive state. Homo- and heterodimerizes to form functional channels with distinct regulatory and gating properties. Allows K(+) currents with fast-gating kinetics important for the repolarization and hyperpolarization phases of action potentials. In granule neurons, hyperpolarizes the resting membrane potential to limit intrinsic neuronal excitability, but once the action potential threshold is reached, supports high-frequency action potential firing and increased neuronal excitability. Homomeric and/or heteromeric KCNK3:KCNK9 channels operate in cerebellar granule cells, whereas heteromeric KCNK1:KCNK9 enables currents in hippocampal dentate gyrus granule neurons. Dispensable for central chemosensory respiration i.e. breathing controlled by brainstem CO2/pH, it rather conducts pH-sensitive currents and controls the firing rate of serotonergic raphe neurons involved in potentiation of the respiratory chemoreflex. In retinal ganglion cells, mediates outward rectifying currents that regulate action potentials in response to acidification of the synaptic cleft. Involved in transmission of image-forming and nonimage-forming visual information in the retina. In adrenal gland, contributes to the maintenance of a hyperpolarized resting membrane potential of aldosterone-producing cells at zona glomerulosa and limits aldosterone release as part of a regulatory mechanism that controls arterial blood pressure and electrolyte homeostasis. In Mus musculus (Mouse), this protein is Potassium channel subfamily K member 9.